The primary structure comprises 260 residues: Magnesium dechelatase SGRL, chloroplastic (260 aa).

The transit peptide at 1–45 directs the protein to the chloroplast; that stretch reads MACYIVPYYHHPVLSHPNREIFSHRHHHHHRFCNNLLNRRISVPR.

Belongs to the staygreen family. In terms of assembly, interacts with the light harvesting complex II (LHCII). Interacts with the chlorophyll catabolic enzymes (CCEs) NYC1, NOL, PAO and RCCR. As to expression, expressed in cotyledons, pollen and young leaves.

Its subcellular location is the plastid. The protein localises to the chloroplast thylakoid. It catalyses the reaction chlorophyllide a + 2 H(+) = pheophorbide a + Mg(2+). Its function is as follows. Magnesium chelatase involved in chlorophyll a degradation in the chlorophyll-protein complexes of photosystem I (PSI) and photosystem II (PSII). Contributes to the degradation of PSI and PSII in the thylakoid membranes. Recombinant SGRL possesses high dechelating activity against chlorophyllide a, very low activity against chlorophyll a, and no activity against chlorophyll b. Contributes to abiotic stress-induced chlorophyll degradation and leaf yellowing during vegetative plant growth. In Arabidopsis thaliana (Mouse-ear cress), this protein is Magnesium dechelatase SGRL, chloroplastic.